We begin with the raw amino-acid sequence, 78 residues long: D-alanyl carrier protein (78 aa).

The region spanning 1-78 (MEFRDQVLDL…KIVAVLEELR (78 aa)) is the Carrier domain. O-(pantetheine 4'-phosphoryl)serine is present on Ser-36.

This sequence belongs to the DltC family. 4'-phosphopantetheine is transferred from CoA to a specific serine of apo-DCP.

It localises to the cytoplasm. The protein operates within cell wall biogenesis; lipoteichoic acid biosynthesis. Functionally, carrier protein involved in the D-alanylation of lipoteichoic acid (LTA). The loading of thioester-linked D-alanine onto DltC is catalyzed by D-alanine--D-alanyl carrier protein ligase DltA. The DltC-carried D-alanyl group is further transferred to cell membrane phosphatidylglycerol (PG) by forming an ester bond, probably catalyzed by DltD. D-alanylation of LTA plays an important role in modulating the properties of the cell wall in Gram-positive bacteria, influencing the net charge of the cell wall. This is D-alanyl carrier protein from Staphylococcus saprophyticus subsp. saprophyticus (strain ATCC 15305 / DSM 20229 / NCIMB 8711 / NCTC 7292 / S-41).